The primary structure comprises 129 residues: Small ribosomal subunit protein uS11 (129 aa).

This sequence belongs to the universal ribosomal protein uS11 family. In terms of assembly, part of the 30S ribosomal subunit. Interacts with proteins S7 and S18. Binds to IF-3.

Functionally, located on the platform of the 30S subunit, it bridges several disparate RNA helices of the 16S rRNA. Forms part of the Shine-Dalgarno cleft in the 70S ribosome. The chain is Small ribosomal subunit protein uS11 from Baumannia cicadellinicola subsp. Homalodisca coagulata.